We begin with the raw amino-acid sequence, 29 residues long: MEIDVLGWVALLVVFTWSIAMVVWGRNGL.

The helical transmembrane segment at 3 to 23 threads the bilayer; it reads IDVLGWVALLVVFTWSIAMVV.

The protein belongs to the PetN family. In terms of assembly, the 4 large subunits of the cytochrome b6-f complex are cytochrome b6, subunit IV (17 kDa polypeptide, PetD), cytochrome f and the Rieske protein, while the 4 small subunits are PetG, PetL, PetM and PetN. The complex functions as a dimer.

Its subcellular location is the cellular thylakoid membrane. Its function is as follows. Component of the cytochrome b6-f complex, which mediates electron transfer between photosystem II (PSII) and photosystem I (PSI), cyclic electron flow around PSI, and state transitions. In Mastigocladus laminosus (Fischerella sp.), this protein is Cytochrome b6-f complex subunit 8.